The primary structure comprises 336 residues: Electron transfer flavoprotein subunit alpha (336 aa).

Position 275–303 (Leu275–Asp303) interacts with FAD.

It belongs to the ETF alpha-subunit/FixB family. In terms of assembly, heterodimer of an alpha and a beta subunit. FAD is required as a cofactor.

In terms of biological role, the electron transfer flavoprotein serves as a specific electron acceptor for other dehydrogenases. It transfers the electrons to the main respiratory chain via ETF-ubiquinone oxidoreductase (ETF dehydrogenase). This is Electron transfer flavoprotein subunit alpha (etfA) from Clostridium acetobutylicum (strain ATCC 824 / DSM 792 / JCM 1419 / IAM 19013 / LMG 5710 / NBRC 13948 / NRRL B-527 / VKM B-1787 / 2291 / W).